We begin with the raw amino-acid sequence, 380 residues long: Dynactin subunit 2 (380 aa).

A disordered region spans residues 1–32 (MADPKFQNLPGIAYDQPDVYETPDDPELDTSD). A compositionally biased stretch (acidic residues) spans 21–32 (ETPDDPELDTSD). Phosphoserine is present on residues Ser-49, Ser-58, and Ser-86. Coiled-coil stretches lie at residues 100–135 (VQKC…QSYD) and 353–377 (ETFA…AAIS).

Belongs to the dynactin subunit 2 family. In terms of assembly, subunit of dynactin, a multiprotein complex associated with dynein.

It is found in the cytoplasm. Its subcellular location is the cytoskeleton. The protein resides in the membrane. Functionally, modulates cytoplasmic dynein binding to an organelle, and plays a role in prometaphase chromosome alignment and spindle organization during mitosis. May play a role in synapse formation during brain development. This is Dynactin subunit 2 from Drosophila melanogaster (Fruit fly).